The primary structure comprises 68 residues: Large ribosomal subunit protein bL32 (68 aa).

This sequence belongs to the bacterial ribosomal protein bL32 family.

The polypeptide is Large ribosomal subunit protein bL32 (Orientia tsutsugamushi (strain Boryong) (Rickettsia tsutsugamushi)).